Reading from the N-terminus, the 362-residue chain is Methylthioribose-1-phosphate isomerase (362 aa).

Substrate-binding positions include 53–55, Arg-90, and Gln-201; that span reads RGA. Asp-241 serves as the catalytic Proton donor. 251 to 252 is a substrate binding site; it reads NK.

It belongs to the eIF-2B alpha/beta/delta subunits family. MtnA subfamily.

It catalyses the reaction 5-(methylsulfanyl)-alpha-D-ribose 1-phosphate = 5-(methylsulfanyl)-D-ribulose 1-phosphate. Its pathway is amino-acid biosynthesis; L-methionine biosynthesis via salvage pathway; L-methionine from S-methyl-5-thio-alpha-D-ribose 1-phosphate: step 1/6. In terms of biological role, catalyzes the interconversion of methylthioribose-1-phosphate (MTR-1-P) into methylthioribulose-1-phosphate (MTRu-1-P). This chain is Methylthioribose-1-phosphate isomerase, found in Dechloromonas aromatica (strain RCB).